Reading from the N-terminus, the 1253-residue chain is Cytoplasmic FMR1-interacting protein 2 (1253 aa).

An N6-acetyllysine modification is found at K1037.

Belongs to the CYFIP family. As to quaternary structure, component of the WAVE1 complex composed of ABI2, CYFIP2, BRK1, NCKAP1 and WASF1/WAVE1. Interacts with RAC1 (activated form) which causes the complex to dissociate, releasing activated WASF1. The complex can also be activated by NCK1. Interacts with SHANK3; the interaction mediates the association of SHANK3 with the WAVE1 complex. Interacts with FMR1; the interaction occurs in a RNA-dependent manner. Interacts with FXR1 and FXR2. Interacts with TMEM108 (via N-terminus); the interaction associates TMEM108 with the WAVE1 complex.

It localises to the cytoplasm. The protein localises to the nucleus. The protein resides in the perinuclear region. It is found in the synapse. Its subcellular location is the synaptosome. Functionally, involved in T-cell adhesion and p53-dependent induction of apoptosis. Does not bind RNA. As component of the WAVE1 complex, required for BDNF-NTRK2 endocytic trafficking and signaling from early endosomes. The chain is Cytoplasmic FMR1-interacting protein 2 from Pongo abelii (Sumatran orangutan).